The primary structure comprises 32 residues: Fibrinolytic enzyme 2 (32 aa).

One can recognise a Peptidase S8 domain in the interval 1–32 (ISGTSMSCPHVAGRAYVLDTSLRVYLLDTGLR). Catalysis depends on Ser5, which acts as the Charge relay system.

The protein belongs to the peptidase S8 family.

Its activity is regulated as follows. Inhibited by PMSF. Not inhibited by benzamidine, aprotinin, SBTI, EDTA, EGTA, 2-mercaptoethanol, iodoacetic acid or pepstatin A. Functionally, serine protease. Has fibrinolytic and fibrinogenolytic but no plasminogenolytic activity. Cleaves after Arg and Lys residues. Cleaves fibrinogen alpha chain, beta chain and gamma chain in that order. This Hediste japonica (Polychaete worm) protein is Fibrinolytic enzyme 2.